The chain runs to 306 residues: Agmatinase (306 aa).

Mn(2+)-binding residues include histidine 126, aspartate 149, histidine 151, aspartate 153, aspartate 230, and aspartate 232.

This sequence belongs to the arginase family. Agmatinase subfamily. It depends on Mn(2+) as a cofactor.

It carries out the reaction agmatine + H2O = urea + putrescine. It participates in amine and polyamine biosynthesis; putrescine biosynthesis via agmatine pathway; putrescine from agmatine: step 1/1. Functionally, catalyzes the formation of putrescine from agmatine. This Salmonella agona (strain SL483) protein is Agmatinase.